Reading from the N-terminus, the 110-residue chain is Large ribosomal subunit protein uL22 (110 aa).

This sequence belongs to the universal ribosomal protein uL22 family. As to quaternary structure, part of the 50S ribosomal subunit.

In terms of biological role, this protein binds specifically to 23S rRNA; its binding is stimulated by other ribosomal proteins, e.g. L4, L17, and L20. It is important during the early stages of 50S assembly. It makes multiple contacts with different domains of the 23S rRNA in the assembled 50S subunit and ribosome. Functionally, the globular domain of the protein is located near the polypeptide exit tunnel on the outside of the subunit, while an extended beta-hairpin is found that lines the wall of the exit tunnel in the center of the 70S ribosome. The chain is Large ribosomal subunit protein uL22 from Alkaliphilus oremlandii (strain OhILAs) (Clostridium oremlandii (strain OhILAs)).